The primary structure comprises 231 residues: 5'-methylthioadenosine/S-adenosylhomocysteine nucleosidase (231 aa).

Catalysis depends on glutamate 12, which acts as the Proton acceptor. Substrate is bound by residues glycine 78, isoleucine 153, and methionine 174–glutamate 175. The active-site Proton donor is the aspartate 198.

It belongs to the PNP/UDP phosphorylase family. MtnN subfamily.

The enzyme catalyses S-adenosyl-L-homocysteine + H2O = S-(5-deoxy-D-ribos-5-yl)-L-homocysteine + adenine. It carries out the reaction S-methyl-5'-thioadenosine + H2O = 5-(methylsulfanyl)-D-ribose + adenine. It catalyses the reaction 5'-deoxyadenosine + H2O = 5-deoxy-D-ribose + adenine. The protein operates within amino-acid biosynthesis; L-methionine biosynthesis via salvage pathway; S-methyl-5-thio-alpha-D-ribose 1-phosphate from S-methyl-5'-thioadenosine (hydrolase route): step 1/2. Its function is as follows. Catalyzes the irreversible cleavage of the glycosidic bond in both 5'-methylthioadenosine (MTA) and S-adenosylhomocysteine (SAH/AdoHcy) to adenine and the corresponding thioribose, 5'-methylthioribose and S-ribosylhomocysteine, respectively. Also cleaves 5'-deoxyadenosine, a toxic by-product of radical S-adenosylmethionine (SAM) enzymes, into 5-deoxyribose and adenine. The chain is 5'-methylthioadenosine/S-adenosylhomocysteine nucleosidase from Maridesulfovibrio salexigens (strain ATCC 14822 / DSM 2638 / NCIMB 8403 / VKM B-1763) (Desulfovibrio salexigens).